A 369-amino-acid chain; its full sequence is Methionine import ATP-binding protein MetN 2 (369 aa).

Residues 33–270 (VRFIGLGKTY…PRHEVTRTLL (238 aa)) enclose the ABC transporter domain. 67–74 (GRSGAGKS) contributes to the ATP binding site.

Belongs to the ABC transporter superfamily. Methionine importer (TC 3.A.1.24) family. As to quaternary structure, the complex is composed of two ATP-binding proteins (MetN), two transmembrane proteins (MetI) and a solute-binding protein (MetQ).

The protein resides in the cell inner membrane. The enzyme catalyses L-methionine(out) + ATP + H2O = L-methionine(in) + ADP + phosphate + H(+). It carries out the reaction D-methionine(out) + ATP + H2O = D-methionine(in) + ADP + phosphate + H(+). Its function is as follows. Part of the ABC transporter complex MetNIQ involved in methionine import. Responsible for energy coupling to the transport system. This chain is Methionine import ATP-binding protein MetN 2, found in Pseudomonas putida (strain ATCC 47054 / DSM 6125 / CFBP 8728 / NCIMB 11950 / KT2440).